The following is a 320-amino-acid chain: Ferrochelatase (320 aa).

The Fe cation site is built by His-194 and Glu-275.

Belongs to the ferrochelatase family. As to quaternary structure, monomer.

It is found in the cytoplasm. The enzyme catalyses heme b + 2 H(+) = protoporphyrin IX + Fe(2+). Its pathway is porphyrin-containing compound metabolism; protoheme biosynthesis; protoheme from protoporphyrin-IX: step 1/1. Catalyzes the ferrous insertion into protoporphyrin IX. This chain is Ferrochelatase, found in Escherichia coli (strain K12 / MC4100 / BW2952).